We begin with the raw amino-acid sequence, 418 residues long: Cytochrome P450 monooxygenase ABA2 (418 aa).

C355 is a heme binding site.

The protein belongs to the cytochrome P450 family. Heme is required as a cofactor.

The protein operates within hormone biosynthesis. Functionally, cytochrome P450 monooxygenase involved in the biosynthesis of abscisic acid (ABA), a phytohormone that acts antagonistically toward salicylic acid (SA), jasmonic acid (JA) and ethylene (ETH) signaling, to impede plant defense responses. During pathogen-host interaction, ABA plays a dual role in disease severity by increasing plant susceptibility and accelerating pathogenesis in the fungus itself. The first step of the pathway catalyzes the reaction from farnesyl diphosphate to alpha-ionylideneethane performed by the alpha-ionylideneethane synthase ABA3 via a three-step reaction mechanism involving 2 neutral intermediates, beta-farnesene and allofarnesene. The cytochrome P450 monooxygenase ABA1 might then be involved in the conversion of alpha-ionylideneethane to alpha-ionylideneacetic acid. Alpha-ionylideneacetic acid is further converted to abscisic acid in 2 steps involving the cytochrome P450 monooxygenase ABA2 and the short-chain dehydrogenase/reductase ABA4, via the intermediates 1'-deoxy-ABA or 1',4'-trans-diol-ABA, depending on the order of action of these 2 enzymes. ABA2 is responsible for the hydroxylation of carbon atom C-1' and ABA4 might be involved in the oxidation of the C-4' carbon atom. The sequence is that of Cytochrome P450 monooxygenase ABA2 from Pyricularia oryzae (strain Y34) (Rice blast fungus).